We begin with the raw amino-acid sequence, 204 residues long: Matrix-remodeling-associated protein 7 (204 aa).

A helical transmembrane segment spans residues 7 to 27; sequence LLAALPALATALALLLAWLLV. A disordered region spans residues 32–148; that stretch reads AASPEPARAP…FSFKYSPGKL (117 aa). Residues 38–47 are compositionally biased toward pro residues; sequence ARAPPEPAPP. The span at 63-103 shows a compositional bias: low complexity; the sequence is EPAASPAGPEEPGEPAGLGELGEPAGPGEPEGPGDPAAAPA. Residues 110-126 are compositionally biased toward basic and acidic residues; the sequence is VEARQEEEQDLDGEKGP. At Ser191 the chain carries Phosphoserine.

It localises to the membrane. The sequence is that of Matrix-remodeling-associated protein 7 (MXRA7) from Homo sapiens (Human).